The primary structure comprises 314 residues: 4-diphosphocytidyl-2-C-methyl-D-erythritol kinase (314 aa).

The active site involves K11. 95-105 provides a ligand contact to ATP; it reads PIGAGLAGGST. Residue D137 is part of the active site.

Belongs to the GHMP kinase family. IspE subfamily.

It carries out the reaction 4-CDP-2-C-methyl-D-erythritol + ATP = 4-CDP-2-C-methyl-D-erythritol 2-phosphate + ADP + H(+). It functions in the pathway isoprenoid biosynthesis; isopentenyl diphosphate biosynthesis via DXP pathway; isopentenyl diphosphate from 1-deoxy-D-xylulose 5-phosphate: step 3/6. Catalyzes the phosphorylation of the position 2 hydroxy group of 4-diphosphocytidyl-2C-methyl-D-erythritol. This is 4-diphosphocytidyl-2-C-methyl-D-erythritol kinase from Synechococcus elongatus (strain ATCC 33912 / PCC 7942 / FACHB-805) (Anacystis nidulans R2).